We begin with the raw amino-acid sequence, 869 residues long: MAPTPSSSRSNQTQYTLIRTPQTKQRLNFHSKTPNPDGSKDPSPPEHPVEVIGRIRDYPDRKEKSPSILQVNTDNQTVRVRADVGYRDFTLDGVSFSEQEGLEEFYKKFIEERIKGVKVGNKCTIMMYGPTGAGKSHTMFGCGKEPGIVYRSLRDILGDSDQDGVTFVQVTVLEVYNEEIYDLLSTNSSNNLGIGWPKGASTKVRLEVMGKKAKNASFISGTEAGKISKEIVKVEKRRIVKSTLCNERSSRSHCIIILDVPTVGGRLMLVDMAGSENIDQAGQTGFEAKMQTAKINQGNIALKRVVESIANGDSHVPFRDSKLTMLLQDSFEDDKSKILMILCASPDPKEMHKTLCTLEYGAKAKCIVRGSHTPNKDKYGGDESASAVILGSRIAAMDEFIIKLQSEKKQKEKERNEAQKQLKKKEEEVAALRSLLTQREACATNEEEIKEKVNERTQLLKSELDKKLEECRRMAEEFVEMERRRMEERIVQQQEELEMMRRRLEEIEVEFRRSNGGSVDETSGFAKRLRSLYSDDDPGMVKSMDLDMGDPEPVKQVWGAVSHQSSNTISSNFTNLLQPKPSENMLTQMYPDRVCLSTVFEEEEVEEEEEKVIVEDKSICLITTPMPSLNSEGLGKENCFNGADDKESASSRRLRIQNIFTLCGNQRELSQHSGQEEDQANIASPDKKDNQFFSITNKAEALAVEEAKENNISVDQRENGQLDIYVKWETAADNPRKLITTLRVTKDATLADLRKLIEIYLGSDNQAFTFLKLGEPCGAQVAKEKESTVQATSLPLCNGHAYLATLRPGKSSQHKSLQPASPLPLNPIENMMEVTPISKVTPNHQVDEFSSPNLVAHLSSTPFITLRRH.

The segment covering 1 to 36 (MAPTPSSSRSNQTQYTLIRTPQTKQRLNFHSKTPNP) has biased composition (polar residues). The tract at residues 1–50 (MAPTPSSSRSNQTQYTLIRTPQTKQRLNFHSKTPNPDGSKDPSPPEHPVE) is disordered. The span at 38-50 (GSKDPSPPEHPVE) shows a compositional bias: basic and acidic residues. In terms of domain architecture, Kinesin motor spans 48-367 (PVEVIGRIRD…LEYGAKAKCI (320 aa)). 129–136 (GPTGAGKS) serves as a coordination point for ATP. The stretch at 393–515 (RIAAMDEFII…EIEVEFRRSN (123 aa)) forms a coiled coil.

This sequence belongs to the TRAFAC class myosin-kinesin ATPase superfamily. Kinesin family. KIN-10 subfamily. In terms of assembly, binds microtubules.

Its subcellular location is the cytoplasm. It localises to the cytoskeleton. The protein localises to the phragmoplast. In terms of biological role, probable plus end-directed motor protein that may contribute to the transport of Golgi-derived vesicles in the phragmoplast. The chain is Kinesin-like protein KIN-10A from Arabidopsis thaliana (Mouse-ear cress).